A 500-amino-acid polypeptide reads, in one-letter code: Trehalose-6-phosphate synthase (500 aa).

Arginine 28 is a D-glucose 6-phosphate binding site. 48-49 (GG) lines the UDP-alpha-D-glucose pocket. Residues tyrosine 104 and aspartate 158 each coordinate D-glucose 6-phosphate. UDP-alpha-D-glucose-binding residues include arginine 300 and lysine 305. Arginine 338 contacts D-glucose 6-phosphate. A UDP-alpha-D-glucose-binding site is contributed by 403 to 407 (LVAKE).

Belongs to the glycosyltransferase 20 family. As to quaternary structure, homotetramer.

The catalysed reaction is ADP-alpha-D-glucose + D-glucose 6-phosphate = alpha,alpha-trehalose 6-phosphate + ADP + H(+). It catalyses the reaction CDP-alpha-D-glucose + D-glucose 6-phosphate = alpha,alpha-trehalose 6-phosphate + CDP + H(+). It carries out the reaction GDP-alpha-D-glucose + D-glucose 6-phosphate = alpha,alpha-trehalose 6-phosphate + GDP + H(+). The enzyme catalyses TDP-alpha-D-glucose + D-glucose 6-phosphate = 5-methyl-UDP + alpha,alpha-trehalose 6-phosphate + H(+). The catalysed reaction is D-glucose 6-phosphate + UDP-alpha-D-glucose = alpha,alpha-trehalose 6-phosphate + UDP + H(+). The protein operates within glycan biosynthesis; trehalose biosynthesis. In terms of biological role, probably involved in the osmoprotection via the biosynthesis of trehalose and in the production of glycogen and alpha-glucan via the TreS-Pep2 branch involved in the biosynthesis of maltose-1-phosphate (M1P). Catalyzes the transfer of glucose from UDP-glucose (UDP-Glc) to D-glucose 6-phosphate (Glc-6-P) to form trehalose-6-phosphate. Probably also able to use ADP-Glc, CDP-Glc, GDP-Glc and TDP-Glc as glucosyl donors. This Mycobacterium ulcerans (strain Agy99) protein is Trehalose-6-phosphate synthase.